A 420-amino-acid polypeptide reads, in one-letter code: Serine hydroxymethyltransferase (420 aa).

(6S)-5,6,7,8-tetrahydrofolate is bound by residues leucine 121 and 125–127; that span reads GHL. Lysine 230 carries the N6-(pyridoxal phosphate)lysine modification. (6S)-5,6,7,8-tetrahydrofolate-binding positions include glutamate 246 and 354-356; that span reads SPF.

The protein belongs to the SHMT family. Homodimer. Requires pyridoxal 5'-phosphate as cofactor.

Its subcellular location is the cytoplasm. The enzyme catalyses (6R)-5,10-methylene-5,6,7,8-tetrahydrofolate + glycine + H2O = (6S)-5,6,7,8-tetrahydrofolate + L-serine. The protein operates within one-carbon metabolism; tetrahydrofolate interconversion. It functions in the pathway amino-acid biosynthesis; glycine biosynthesis; glycine from L-serine: step 1/1. Functionally, catalyzes the reversible interconversion of serine and glycine with tetrahydrofolate (THF) serving as the one-carbon carrier. This reaction serves as the major source of one-carbon groups required for the biosynthesis of purines, thymidylate, methionine, and other important biomolecules. Also exhibits THF-independent aldolase activity toward beta-hydroxyamino acids, producing glycine and aldehydes, via a retro-aldol mechanism. This Rickettsia akari (strain Hartford) protein is Serine hydroxymethyltransferase.